The sequence spans 387 residues: TSC22 domain family protein 4 (387 aa).

Disordered regions lie at residues Met1 to Tyr85 and Ile135 to Gly232. Over residues Ser28 to Asp51 the composition is skewed to pro residues. Residue Thr57 is modified to Phosphothreonine. Phosphoserine is present on residues Ser62 and Ser165. Position 183 is a phosphothreonine (Thr183). 2 positions are modified to phosphoserine: Ser187 and Ser189. Position 223 is a phosphothreonine (Thr223). Phosphoserine is present on residues Ser254, Ser258, and Ser271. The segment at Leu336–Leu357 is leucine-zipper. Ser362 carries the phosphoserine modification. A disordered region spans residues Gln368–Ile387.

It belongs to the TSC-22/Dip/Bun family. As to quaternary structure, forms a homodimer or heterodimer. Forms a heterodimer with TSC22D1 isoforms 1 and 2. Interacts with NRBP1.

Its subcellular location is the nucleus. The protein resides in the cytoplasm. It is found in the cell projection. It localises to the dendrite. The protein localises to the synapse. In terms of biological role, binds DNA and acts as a transcriptional repressor. Involved in the regulation of systematic glucose homeostasis and insulin sensitivity, via transcriptional repression of downstream insulin signaling targets such as OBP2A/LCN13. Acts as a negative regulator of lipogenic gene expression in hepatocytes and thereby mediates the control of very low-density lipoprotein release. May play a role in neurite elongation and survival. In Rattus norvegicus (Rat), this protein is TSC22 domain family protein 4.